A 174-amino-acid polypeptide reads, in one-letter code: Peptide deformylase (174 aa).

Cys-96 and His-138 together coordinate Fe cation. The active site involves Glu-139. A Fe cation-binding site is contributed by His-142.

It belongs to the polypeptide deformylase family. It depends on Fe(2+) as a cofactor.

It catalyses the reaction N-terminal N-formyl-L-methionyl-[peptide] + H2O = N-terminal L-methionyl-[peptide] + formate. Its function is as follows. Removes the formyl group from the N-terminal Met of newly synthesized proteins. Requires at least a dipeptide for an efficient rate of reaction. N-terminal L-methionine is a prerequisite for activity but the enzyme has broad specificity at other positions. The chain is Peptide deformylase from Helicobacter pylori (strain HPAG1).